Here is a 107-residue protein sequence, read N- to C-terminus: HTH-type transcriptional regulator Rv2034 (107 aa).

The 93-residue stretch at M1–L93 folds into the HTH arsR-type domain. A DNA-binding region (H-T-H motif) is located at residues V33–T56.

In terms of assembly, homodimer.

With respect to regulation, DNA-binding ability is not susceptible to zinc, nickel, cobalt, cadmium, lead, copper and manganese ions. Functionally, involved in the regulation of lipid metabolism and hypoxic response. Positively regulates transcription of various genes, such as phoP, groEL2 and dosR. Negatively regulates its own transcription. Acts by binding to a specific palindromic sequence motif in promoter regions. The protein is HTH-type transcriptional regulator Rv2034 of Mycobacterium tuberculosis (strain ATCC 25618 / H37Rv).